Consider the following 57-residue polypeptide: Large ribosomal subunit protein uL30 (57 aa).

This sequence belongs to the universal ribosomal protein uL30 family. As to quaternary structure, part of the 50S ribosomal subunit.

The polypeptide is Large ribosomal subunit protein uL30 (Clostridium perfringens (strain ATCC 13124 / DSM 756 / JCM 1290 / NCIMB 6125 / NCTC 8237 / Type A)).